We begin with the raw amino-acid sequence, 64 residues long: Large ribosomal subunit protein bL35 (64 aa).

It belongs to the bacterial ribosomal protein bL35 family.

This Acidothermus cellulolyticus (strain ATCC 43068 / DSM 8971 / 11B) protein is Large ribosomal subunit protein bL35.